The following is a 95-amino-acid chain: Protein YY1 (95 aa).

The N-terminal stretch at 1-26 is a signal peptide; it reads MAVTRTALLVVLVAGAMTMTMRGAEA. 4 disulfides stabilise this stretch: Cys31–Cys72, Cys41–Cys61, Cys62–Cys87, and Cys74–Cys94.

Belongs to the A9/FIL1 family. Anther.

The protein localises to the secreted. The chain is Protein YY1 from Oryza sativa subsp. japonica (Rice).